The chain runs to 498 residues: SCADDRNPLEECFQETDYEEFLEIARNGLKATSNPKHVVIVGAGMSGLSAAYVLAGAGHQVTVLEASERAGGRVRTYRNDKEGWYANLGPMRLPEKHRIVREYITKFGLQLNEFSQENENAWYFIKNIRKRVGEVKKDPGLLQYPVKPSEEGKSAGQLYEESLGKVVEELKRTNCSYILDKYDTYSTKEYLIKEGNLSPGAVDMIGDLLNEDSGYYVSFIESLKHDNIFGYEKRFNEIVDGMDKLPTSMYQAIEEKVRFNARVIKIQQNDNEVTVTYQTSENEMSPVTADYVIVCTTSRAARRITFEPPLPPKKAHALRSVHYRSGTKIFLTCTKKFWEDDGIHGGKSTTDLPSRFVYYPNHDFSSGSAVIMAYGIGDDANFFQALDHKDCGDTVINDLSLIHQLTKEEIQSFCYLSKIQRWSLDKYAMGGITTFTPYQFQHFSEALTAPFKRIYFAGEYTAQFHGWIDSTIKSGLTAARDVNRASENPSGIHLSNDN.

The first 3 residues, 1-3 (SCA), serve as a signal peptide directing secretion. Residues Cys-12 and Cys-175 are joined by a disulfide bond. Residues 45-46 (MS), 65-66 (EA), Arg-73, and 89-92 (GPMR) each bind FAD. Arg-92 lines the substrate pocket. The N-linked (GlcNAc...) asparagine glycan is linked to Asn-174. Position 225 (His-225) interacts with substrate. Val-263 contacts FAD. Cys-333 and Cys-414 form a disulfide bridge. Position 374 (Tyr-374) interacts with substrate. FAD-binding positions include Glu-459 and 466–471 (GWIDST). Position 466-467 (466-467 (GW)) interacts with substrate.

Belongs to the flavin monoamine oxidase family. FIG1 subfamily. As to quaternary structure, monomer. This is in contrast with most of its orthologs, that are non-covalently linked homodimers. FAD serves as cofactor. As to expression, expressed by the venom gland.

It is found in the secreted. It carries out the reaction an L-alpha-amino acid + O2 + H2O = a 2-oxocarboxylate + H2O2 + NH4(+). The catalysed reaction is L-leucine + O2 + H2O = 4-methyl-2-oxopentanoate + H2O2 + NH4(+). In terms of biological role, catalyzes an oxidative deamination of predominantly hydrophobic and aromatic L-amino acids, thus producing hydrogen peroxide that may contribute to the diverse toxic effects of this enzyme. Shows activity on L-Leu. Damage cell membranes of the Gram-positive bacteria S.aureus (MIC=4 ug/ml and MBC=8 ug/ml) and the Gram-negative bacteria A.baumanni (MIC=2 ug/ml and MBC=4 ug/ml). This antibacterial activity is dependent on the production of hydrogen peroxyde, since it is inhibited by catalase, a hydrogen peroxyde scavenger. The chain is L-amino acid oxidase Bs29 from Bothriechis schlegelii (Eyelash palm pitviper).